The following is a 69-amino-acid chain: uncharacterized protein (69 aa).

Residues M1 to S21 form the signal peptide.

It localises to the secreted. This is an uncharacterized protein from Dictyostelium discoideum (Social amoeba).